A 363-amino-acid chain; its full sequence is 3-isopropylmalate dehydrogenase A (363 aa).

Residue 78-89 (GPKWGTGAVRPE) participates in NAD(+) binding. Substrate is bound by residues R96, R106, R135, and D222. Positions 222, 247, and 251 each coordinate Mg(2+). 287–299 (GSAPDIAGKGIVN) serves as a coordination point for NAD(+).

It belongs to the isocitrate and isopropylmalate dehydrogenases family. Homodimer. Mg(2+) serves as cofactor. The cofactor is Mn(2+).

It is found in the cytoplasm. It catalyses the reaction (2R,3S)-3-isopropylmalate + NAD(+) = 4-methyl-2-oxopentanoate + CO2 + NADH. It participates in amino-acid biosynthesis; L-leucine biosynthesis; L-leucine from 3-methyl-2-oxobutanoate: step 3/4. Its function is as follows. Catalyzes the oxidation of 3-carboxy-2-hydroxy-4-methylpentanoate (3-isopropylmalate) to 3-carboxy-4-methyl-2-oxopentanoate. The product decarboxylates to 4-methyl-2 oxopentanoate. This is 3-isopropylmalate dehydrogenase A (leu2A) from Aspergillus niger.